Here is a 154-residue protein sequence, read N- to C-terminus: Myoglobin (154 aa).

One can recognise a Globin domain in the interval 2–148; that stretch reads GLSEAEWQLV…FRKDIAAKYK (147 aa). Phosphoserine is present on serine 4. Nitrite is bound at residue histidine 65. O2 is bound at residue histidine 65. Residue threonine 68 is modified to Phosphothreonine. A heme b-binding site is contributed by histidine 94.

Belongs to the globin family. Monomeric.

It is found in the cytoplasm. It localises to the sarcoplasm. It catalyses the reaction Fe(III)-heme b-[protein] + nitric oxide + H2O = Fe(II)-heme b-[protein] + nitrite + 2 H(+). The catalysed reaction is H2O2 + AH2 = A + 2 H2O. Monomeric heme protein which primary function is to store oxygen and facilitate its diffusion within muscle tissues. Reversibly binds oxygen through a pentacoordinated heme iron and enables its timely and efficient release as needed during periods of heightened demand. Depending on the oxidative conditions of tissues and cells, and in addition to its ability to bind oxygen, it also has a nitrite reductase activity whereby it regulates the production of bioactive nitric oxide. Under stress conditions, like hypoxia and anoxia, it also protects cells against reactive oxygen species thanks to its pseudoperoxidase activity. The protein is Myoglobin (MB) of Ziphius cavirostris (Cuvier's beaked whale).